We begin with the raw amino-acid sequence, 239 residues long: ATP-dependent dethiobiotin synthetase BioD (239 aa).

15 to 20 (EIGKTF) is a binding site for ATP. Thr-19 is a Mg(2+) binding site. Residue Lys-40 is part of the active site. Residues Asp-57, 118–121 (EGVG), and 178–179 (NH) contribute to the ATP site. Mg(2+)-binding residues include Asp-57 and Glu-118.

It belongs to the dethiobiotin synthetase family. In terms of assembly, homodimer. It depends on Mg(2+) as a cofactor.

The protein localises to the cytoplasm. The catalysed reaction is (7R,8S)-7,8-diammoniononanoate + CO2 + ATP = (4R,5S)-dethiobiotin + ADP + phosphate + 3 H(+). It participates in cofactor biosynthesis; biotin biosynthesis; biotin from 7,8-diaminononanoate: step 1/2. Catalyzes a mechanistically unusual reaction, the ATP-dependent insertion of CO2 between the N7 and N8 nitrogen atoms of 7,8-diaminopelargonic acid (DAPA, also called 7,8-diammoniononanoate) to form a ureido ring. This chain is ATP-dependent dethiobiotin synthetase BioD, found in Burkholderia orbicola (strain MC0-3).